We begin with the raw amino-acid sequence, 462 residues long: tRNA modification GTPase MnmE (462 aa).

Positions 22, 87, and 126 each coordinate (6S)-5-formyl-5,6,7,8-tetrahydrofolate. One can recognise a TrmE-type G domain in the interval 220-382 (GLKVAIVGRP…LARKVQEIVL (163 aa)). A K(+)-binding site is contributed by asparagine 230. GTP contacts are provided by residues 230 to 235 (NVGKSS), 249 to 255 (SNIPGTT), and 274 to 277 (DTAG). Serine 234 provides a ligand contact to Mg(2+). Residues serine 249, isoleucine 251, and threonine 254 each contribute to the K(+) site. Threonine 255 provides a ligand contact to Mg(2+). Lysine 462 serves as a coordination point for (6S)-5-formyl-5,6,7,8-tetrahydrofolate.

This sequence belongs to the TRAFAC class TrmE-Era-EngA-EngB-Septin-like GTPase superfamily. TrmE GTPase family. Homodimer. Heterotetramer of two MnmE and two MnmG subunits. Requires K(+) as cofactor.

It is found in the cytoplasm. Functionally, exhibits a very high intrinsic GTPase hydrolysis rate. Involved in the addition of a carboxymethylaminomethyl (cmnm) group at the wobble position (U34) of certain tRNAs, forming tRNA-cmnm(5)s(2)U34. The protein is tRNA modification GTPase MnmE of Moorella thermoacetica (strain ATCC 39073 / JCM 9320).